A 720-amino-acid chain; its full sequence is DNA replication licensing factor mcm7 (720 aa).

Residues 183 to 210 form a C4-type zinc finger; that stretch reads CDQCGAETYQPIQSPTFMPLIMCPSREC. Residues 331 to 537 form the MCM domain; the sequence is FYEKLAASIA…NDLRLAQHIT (207 aa). ATP is bound by residues Tyr344, Gly383, Ala385, Lys386, Ser387, Asn488, Arg513, and Arg603. An Arginine finger motif is present at residues 512-515; that stretch reads SRFD.

This sequence belongs to the MCM family. Component of the mcm2-7 complex (RLF-M). The complex forms a toroidal hexameric ring with the proposed subunit order mcm2-mcm6-mcm4-mcm7-mcm3-mcm5. The heterodimer of mmcm3/mcm5 interacts with mcm4, mmcm6, mcm7 and weakly with mcm2. The N-terminus is required for interaction with mmcm3, though this interaction may not be direct, and remains in a complex with mmcm3 throughout the cell cycle. Begins to associate with zmcm6 at the neurula stage. Component of the replisome complex. Component of the CMG helicase complex, composed of the mcm2-7 complex, the GINS complex and cdc45. In terms of processing, ubiquitinated by traip when forks converge following formation of DNA interstrand cross-links. Short ubiquitin chains on mcm7 promote recruitment of DNA glycosylase neil3. If the interstrand cross-link cannot be cleaved by neil3, the ubiquitin chains continue to grow on mcm7, promoting the unloading of the CMG helicase complex by the vcp/p97 ATPase.

The protein localises to the nucleus. The protein resides in the chromosome. The enzyme catalyses ATP + H2O = ADP + phosphate + H(+). Functionally, acts as a component of the mcm2-7 complex (mcm complex) which is the putative replicative helicase essential for 'once per cell cycle' DNA replication initiation and elongation in eukaryotic cells. The active ATPase sites in the mcm2-7 ring are formed through the interaction surfaces of two neighboring subunits such that a critical structure of a conserved arginine finger motif is provided in trans relative to the ATP-binding site of the Walker A box of the adjacent subunit. The six ATPase active sites, however, are likely to contribute differentially to the complex helicase activity. The existence of maternal and zygotic forms of mcm3 and mcm6 suggests that specific forms of mcm2-7 complexes may be used during different stages of development. The chain is DNA replication licensing factor mcm7 from Xenopus tropicalis (Western clawed frog).